The sequence spans 562 residues: NAD-dependent malic enzyme (562 aa).

The active-site Proton donor is Y101. R154 contributes to the NAD(+) binding site. The active-site Proton acceptor is the K172. Positions 243, 244, and 267 each coordinate a divalent metal cation. NAD(+) is bound by residues D267 and N415.

The protein belongs to the malic enzymes family. Homotetramer. Requires Mg(2+) as cofactor. Mn(2+) serves as cofactor.

It catalyses the reaction (S)-malate + NAD(+) = pyruvate + CO2 + NADH. The enzyme catalyses oxaloacetate + H(+) = pyruvate + CO2. The sequence is that of NAD-dependent malic enzyme from Shewanella putrefaciens (strain CN-32 / ATCC BAA-453).